The following is an 831-amino-acid chain: Translation initiation factor IF-2 (831 aa).

A compositionally biased stretch (basic and acidic residues) spans 1–11 (MADEIKKENAP). The disordered stretch occupies residues 1–236 (MADEIKKENA…GKHAKKASAL (236 aa)). Over residues 22–31 (TTVSGTSTTG) the composition is skewed to low complexity. Basic and acidic residues-rich tracts occupy residues 49–150 (DLER…RYAD) and 157–166 (DNGKLDDYSD). Over residues 190–200 (RSKNKVVKAKK) the composition is skewed to basic residues. The segment covering 201–225 (GGRDDENGNKNERQSDRRNQKDVKG) has biased composition (basic and acidic residues). The 171-residue stretch at 330–500 (HRAPVVTIMG…LLQSEVLELT (171 aa)) folds into the tr-type G domain. Positions 339–346 (GHVDHGKT) are G1. 339–346 (GHVDHGKT) is a binding site for GTP. The segment at 364–368 (GITQH) is G2. The interval 386-389 (DTPG) is G3. Residues 386–390 (DTPGH) and 440–443 (NKID) contribute to the GTP site. The G4 stretch occupies residues 440 to 443 (NKID). Positions 476-478 (SAK) are G5.

This sequence belongs to the TRAFAC class translation factor GTPase superfamily. Classic translation factor GTPase family. IF-2 subfamily.

It is found in the cytoplasm. Functionally, one of the essential components for the initiation of protein synthesis. Protects formylmethionyl-tRNA from spontaneous hydrolysis and promotes its binding to the 30S ribosomal subunits. Also involved in the hydrolysis of GTP during the formation of the 70S ribosomal complex. The protein is Translation initiation factor IF-2 of Histophilus somni (strain 2336) (Haemophilus somnus).